The following is a 591-amino-acid chain: Nuclear receptor subfamily 4 group A member 2 (591 aa).

Disordered stretches follow at residues 1–22 (MPCV…SQSY) and 110–133 (SEEM…SSTP). Residues 8 to 22 (YGSSPQGASPASQSY) show a composition bias toward low complexity. The nuclear receptor DNA-binding region spans 253-328 (EGLCAVCGDN…VGMVKEVVRT (76 aa)). 2 NR C4-type zinc fingers span residues 256–276 (CAVC…CEGC) and 292–311 (CLAN…CQYC). Positions 280 to 307 (FKRTVQKNAKYVCLANKNCPVDKRRRNR) match the Bipartite nuclear localization signal (NLS1) motif. A disordered region spans residues 330-354 (SLKGRRGRLPSKPKSPQEPSPPSPP). The Nuclear localization signal (NLS1) motif lies at 331-343 (LKGRRGRLPSKPK). A compositionally biased stretch (pro residues) spans 345–354 (PQEPSPPSPP). Positions 353-588 (PPVSLISALV…AIIDKLFLDT (236 aa)) constitute an NR LBD domain. Positions 436–445 (FLELFVLRLA) match the nuclear export sequence (NES1) motif. Residues 561 to 570 (QGLQRIFYLK) carry the nuclear export sequence (NES2) motif.

It belongs to the nuclear hormone receptor family.

The protein resides in the cytoplasm. It localises to the nucleus. Transcriptional regulator which may play a role in the differentiation and maintenance of meso-diencephalic dopaminergic (mdDA) neurons. In Xenopus tropicalis (Western clawed frog), this protein is Nuclear receptor subfamily 4 group A member 2 (nr4a2).